We begin with the raw amino-acid sequence, 1176 residues long: Pesticidal crystal protein Cry1Aa (1176 aa).

The protein belongs to the delta endotoxin family.

Promotes colloidosmotic lysis by binding to the midgut epithelial cells of many lepidopteran larvae. This chain is Pesticidal crystal protein Cry1Aa (cry1Aa), found in Bacillus thuringiensis subsp. entomocidus.